A 354-amino-acid polypeptide reads, in one-letter code: 5,10-methenyltetrahydromethanopterin hydrogenase (354 aa).

Belongs to the HMD family.

It carries out the reaction 5,10-methenyl-5,6,7,8-tetrahydromethanopterin + H2 = 5,10-methylenetetrahydromethanopterin + H(+). Its pathway is one-carbon metabolism; methanogenesis from CO(2); 5,10-methylene-5,6,7,8-tetrahydromethanopterin from 5,10-methenyl-5,6,7,8-tetrahydromethanopterin (hydrogen route): step 1/1. In terms of biological role, catalyzes the reversible reduction of methenyl-H(4)MPT(+) to methylene-H(4)MPT. This chain is 5,10-methenyltetrahydromethanopterin hydrogenase, found in Methanococcus maripaludis (strain C7 / ATCC BAA-1331).